The chain runs to 160 residues: SsrA-binding protein (160 aa).

The protein belongs to the SmpB family.

It localises to the cytoplasm. In terms of biological role, required for rescue of stalled ribosomes mediated by trans-translation. Binds to transfer-messenger RNA (tmRNA), required for stable association of tmRNA with ribosomes. tmRNA and SmpB together mimic tRNA shape, replacing the anticodon stem-loop with SmpB. tmRNA is encoded by the ssrA gene; the 2 termini fold to resemble tRNA(Ala) and it encodes a 'tag peptide', a short internal open reading frame. During trans-translation Ala-aminoacylated tmRNA acts like a tRNA, entering the A-site of stalled ribosomes, displacing the stalled mRNA. The ribosome then switches to translate the ORF on the tmRNA; the nascent peptide is terminated with the 'tag peptide' encoded by the tmRNA and targeted for degradation. The ribosome is freed to recommence translation, which seems to be the essential function of trans-translation. The polypeptide is SsrA-binding protein (Escherichia coli O6:K15:H31 (strain 536 / UPEC)).